Here is a 236-residue protein sequence, read N- to C-terminus: 2-C-methyl-D-erythritol 4-phosphate cytidylyltransferase (236 aa).

This sequence belongs to the IspD/TarI cytidylyltransferase family. IspD subfamily. As to quaternary structure, homodimer.

It carries out the reaction 2-C-methyl-D-erythritol 4-phosphate + CTP + H(+) = 4-CDP-2-C-methyl-D-erythritol + diphosphate. It functions in the pathway isoprenoid biosynthesis; isopentenyl diphosphate biosynthesis via DXP pathway; isopentenyl diphosphate from 1-deoxy-D-xylulose 5-phosphate: step 2/6. In terms of biological role, catalyzes the formation of 4-diphosphocytidyl-2-C-methyl-D-erythritol from CTP and 2-C-methyl-D-erythritol 4-phosphate (MEP). The sequence is that of 2-C-methyl-D-erythritol 4-phosphate cytidylyltransferase from Salmonella paratyphi A (strain ATCC 9150 / SARB42).